Here is a 118-residue protein sequence, read N- to C-terminus: Hydrogenase maturation factor HypA (118 aa).

His-2 contributes to the Ni(2+) binding site. Zn(2+) is bound by residues Cys-73, Cys-76, Cys-90, and Cys-93.

It belongs to the HypA/HybF family.

In terms of biological role, involved in the maturation of [NiFe] hydrogenases. Required for nickel insertion into the metal center of the hydrogenase. This Salmonella typhi protein is Hydrogenase maturation factor HypA.